Consider the following 330-residue polypeptide: Alpha/beta hydrolase domain-containing protein VTE7 (330 aa).

Positions 84-315 (VVLLHCFDSS…GHLPHVENPK (232 aa)) constitute an AB hydrolase-1 domain. Catalysis depends on Ser-157, which acts as the Nucleophile. Catalysis depends on charge relay system residues Asp-279 and His-307.

The protein belongs to the AB hydrolase superfamily.

The protein resides in the plastid. It is found in the chloroplast envelope. In terms of biological role, hydrolase involved in tocopherol (vitamin E) biosynthesis. Releases prenyl alcohols from chlorophyll biosynthetic intermediates, which are then converted to the corresponding diphosphates for tocopherol biosynthesis. Provides most of the phytol from chlorophyll for tocopherol biosynthesis in seeds. The chain is Alpha/beta hydrolase domain-containing protein VTE7 from Arabidopsis thaliana (Mouse-ear cress).